A 670-amino-acid chain; its full sequence is DNA ligase (670 aa).

NAD(+) is bound by residues 32 to 36 (DSEYD), 81 to 82 (SL), and Glu-114. Lys-116 acts as the N6-AMP-lysine intermediate in catalysis. NAD(+)-binding residues include Arg-137, Glu-174, Lys-291, and Lys-315. The Zn(2+) site is built by Cys-409, Cys-412, Cys-427, and Cys-433. A BRCT domain is found at 592–670 (ASENLFKDKT…EEEFLAQITR (79 aa)).

The protein belongs to the NAD-dependent DNA ligase family. LigA subfamily. Mg(2+) serves as cofactor. It depends on Mn(2+) as a cofactor.

It catalyses the reaction NAD(+) + (deoxyribonucleotide)n-3'-hydroxyl + 5'-phospho-(deoxyribonucleotide)m = (deoxyribonucleotide)n+m + AMP + beta-nicotinamide D-nucleotide.. Its function is as follows. DNA ligase that catalyzes the formation of phosphodiester linkages between 5'-phosphoryl and 3'-hydroxyl groups in double-stranded DNA using NAD as a coenzyme and as the energy source for the reaction. It is essential for DNA replication and repair of damaged DNA. The chain is DNA ligase from Haemophilus influenzae (strain ATCC 51907 / DSM 11121 / KW20 / Rd).